Consider the following 387-residue polypeptide: Phosphoglycerate kinase (387 aa).

Substrate is bound by residues D21–N23, R36, H59–R62, R113, and R146. ATP-binding positions include K197, E314, and G340–T343.

It belongs to the phosphoglycerate kinase family. As to quaternary structure, monomer.

It is found in the cytoplasm. It catalyses the reaction (2R)-3-phosphoglycerate + ATP = (2R)-3-phospho-glyceroyl phosphate + ADP. It functions in the pathway carbohydrate degradation; glycolysis; pyruvate from D-glyceraldehyde 3-phosphate: step 2/5. This is Phosphoglycerate kinase from Photorhabdus laumondii subsp. laumondii (strain DSM 15139 / CIP 105565 / TT01) (Photorhabdus luminescens subsp. laumondii).